A 131-amino-acid polypeptide reads, in one-letter code: S-adenosylmethionine decarboxylase proenzyme (131 aa).

Ser-64 serves as the catalytic Schiff-base intermediate with substrate; via pyruvic acid. Ser-64 carries the post-translational modification Pyruvic acid (Ser); by autocatalysis. Residue His-69 is the Proton acceptor; for processing activity of the active site. The Proton donor; for catalytic activity role is filled by Cys-84.

The protein belongs to the prokaryotic AdoMetDC family. Type 1 subfamily. In terms of assembly, heterotetramer of two alpha and two beta chains arranged as a dimer of alpha/beta heterodimers. It depends on pyruvate as a cofactor. In terms of processing, is synthesized initially as an inactive proenzyme. Formation of the active enzyme involves a self-maturation process in which the active site pyruvoyl group is generated from an internal serine residue via an autocatalytic post-translational modification. Two non-identical subunits are generated from the proenzyme in this reaction, and the pyruvate is formed at the N-terminus of the alpha chain, which is derived from the carboxyl end of the proenzyme. The post-translation cleavage follows an unusual pathway, termed non-hydrolytic serinolysis, in which the side chain hydroxyl group of the serine supplies its oxygen atom to form the C-terminus of the beta chain, while the remainder of the serine residue undergoes an oxidative deamination to produce ammonia and the pyruvoyl group blocking the N-terminus of the alpha chain.

The catalysed reaction is S-adenosyl-L-methionine + H(+) = S-adenosyl 3-(methylsulfanyl)propylamine + CO2. It functions in the pathway amine and polyamine biosynthesis; S-adenosylmethioninamine biosynthesis; S-adenosylmethioninamine from S-adenosyl-L-methionine: step 1/1. Functionally, catalyzes the decarboxylation of S-adenosylmethionine to S-adenosylmethioninamine (dcAdoMet), the propylamine donor required for the synthesis of the polyamines spermine and spermidine from the diamine putrescine. In Thermoplasma acidophilum (strain ATCC 25905 / DSM 1728 / JCM 9062 / NBRC 15155 / AMRC-C165), this protein is S-adenosylmethionine decarboxylase proenzyme.